Here is a 166-residue protein sequence, read N- to C-terminus: NADPH-dependent 7-cyano-7-deazaguanine reductase (166 aa).

Cysteine 57 functions as the Thioimide intermediate in the catalytic mechanism. The active-site Proton donor is aspartate 64. Residues 79–81 and 98–99 contribute to the substrate site; these read VES and HE.

Belongs to the GTP cyclohydrolase I family. QueF type 1 subfamily.

It is found in the cytoplasm. It carries out the reaction 7-aminomethyl-7-carbaguanine + 2 NADP(+) = 7-cyano-7-deazaguanine + 2 NADPH + 3 H(+). The protein operates within tRNA modification; tRNA-queuosine biosynthesis. In terms of biological role, catalyzes the NADPH-dependent reduction of 7-cyano-7-deazaguanine (preQ0) to 7-aminomethyl-7-deazaguanine (preQ1). The chain is NADPH-dependent 7-cyano-7-deazaguanine reductase from Staphylococcus epidermidis (strain ATCC 35984 / DSM 28319 / BCRC 17069 / CCUG 31568 / BM 3577 / RP62A).